The sequence spans 342 residues: Ferrochelatase (342 aa).

Residues histidine 188 and glutamate 268 each coordinate Fe cation.

It belongs to the ferrochelatase family.

It localises to the cytoplasm. It carries out the reaction heme b + 2 H(+) = protoporphyrin IX + Fe(2+). The protein operates within porphyrin-containing compound metabolism; protoheme biosynthesis; protoheme from protoporphyrin-IX: step 1/1. Catalyzes the ferrous insertion into protoporphyrin IX. In Rickettsia conorii (strain ATCC VR-613 / Malish 7), this protein is Ferrochelatase.